A 641-amino-acid chain; its full sequence is Chaperone protein HtpG (641 aa).

Residues 1–348 are a; substrate-binding; sequence MTTATEKQTL…SNDLSLNVSR (348 aa). Residues 349-565 are b; that stretch reads EILQNDKAVE…AYDMGVQMRR (217 aa). The interval 566 to 641 is c; it reads IMEAAGQALP…KLLLELSNAG (76 aa).

The protein belongs to the heat shock protein 90 family. In terms of assembly, homodimer.

The protein resides in the cytoplasm. Its function is as follows. Molecular chaperone. Has ATPase activity. The protein is Chaperone protein HtpG of Hahella chejuensis (strain KCTC 2396).